Consider the following 547-residue polypeptide: Chaperonin GroEL (547 aa).

Residues 30–33 (TLGP), Lys51, 87–91 (DGTTT), Gly415, and Asp496 contribute to the ATP site.

Belongs to the chaperonin (HSP60) family. Forms a cylinder of 14 subunits composed of two heptameric rings stacked back-to-back. Interacts with the co-chaperonin GroES.

It is found in the cytoplasm. The catalysed reaction is ATP + H2O + a folded polypeptide = ADP + phosphate + an unfolded polypeptide.. Its function is as follows. Together with its co-chaperonin GroES, plays an essential role in assisting protein folding. The GroEL-GroES system forms a nano-cage that allows encapsulation of the non-native substrate proteins and provides a physical environment optimized to promote and accelerate protein folding. The chain is Chaperonin GroEL from Actinobacillus succinogenes (strain ATCC 55618 / DSM 22257 / CCUG 43843 / 130Z).